Here is a 127-residue protein sequence, read N- to C-terminus: Large-conductance mechanosensitive channel (127 aa).

The next 3 membrane-spanning stretches (helical) occupy residues 9-29 (EFAM…GVAF), 32-52 (IVTA…LGGI), and 75-95 (VIDF…INLL).

Belongs to the MscL family. In terms of assembly, homopentamer.

It is found in the cell inner membrane. Channel that opens in response to stretch forces in the membrane lipid bilayer. May participate in the regulation of osmotic pressure changes within the cell. The sequence is that of Large-conductance mechanosensitive channel from Legionella pneumophila subsp. pneumophila (strain Philadelphia 1 / ATCC 33152 / DSM 7513).